The chain runs to 202 residues: Peptidyl-tRNA hydrolase (202 aa).

Position 14 (tyrosine 14) interacts with tRNA. Histidine 19 serves as the catalytic Proton acceptor. Phenylalanine 64, asparagine 66, and asparagine 112 together coordinate tRNA.

It belongs to the PTH family. As to quaternary structure, monomer.

The protein localises to the cytoplasm. The catalysed reaction is an N-acyl-L-alpha-aminoacyl-tRNA + H2O = an N-acyl-L-amino acid + a tRNA + H(+). In terms of biological role, hydrolyzes ribosome-free peptidyl-tRNAs (with 1 or more amino acids incorporated), which drop off the ribosome during protein synthesis, or as a result of ribosome stalling. Catalyzes the release of premature peptidyl moieties from peptidyl-tRNA molecules trapped in stalled 50S ribosomal subunits, and thus maintains levels of free tRNAs and 50S ribosomes. The chain is Peptidyl-tRNA hydrolase from Methylobacterium radiotolerans (strain ATCC 27329 / DSM 1819 / JCM 2831 / NBRC 15690 / NCIMB 10815 / 0-1).